The sequence spans 161 residues: RNA pyrophosphohydrolase (161 aa).

Residues Lys-7–Glu-149 enclose the Nudix hydrolase domain. The short motif at Gly-40 to Gly-61 is the Nudix box element.

It belongs to the Nudix hydrolase family. RppH subfamily. The cofactor is a divalent metal cation.

In terms of biological role, accelerates the degradation of transcripts by removing pyrophosphate from the 5'-end of triphosphorylated RNA, leading to a more labile monophosphorylated state that can stimulate subsequent ribonuclease cleavage. This chain is RNA pyrophosphohydrolase, found in Wolbachia sp. subsp. Brugia malayi (strain TRS).